The primary structure comprises 344 residues: Uroporphyrinogen decarboxylase (344 aa).

Residues 23–27 (RQAGR), Asp73, Tyr149, Thr204, and His321 contribute to the substrate site.

This sequence belongs to the uroporphyrinogen decarboxylase family. As to quaternary structure, homodimer.

The protein localises to the cytoplasm. The catalysed reaction is uroporphyrinogen III + 4 H(+) = coproporphyrinogen III + 4 CO2. It functions in the pathway porphyrin-containing compound metabolism; protoporphyrin-IX biosynthesis; coproporphyrinogen-III from 5-aminolevulinate: step 4/4. Its function is as follows. Catalyzes the decarboxylation of four acetate groups of uroporphyrinogen-III to yield coproporphyrinogen-III. In Francisella philomiragia subsp. philomiragia (strain ATCC 25017 / CCUG 19701 / FSC 153 / O#319-036), this protein is Uroporphyrinogen decarboxylase.